The following is a 138-amino-acid chain: Small ribosomal subunit protein uS11c (138 aa).

Residues 1 to 22 (MAKAIPKISSRRNGRIGSRKGA) are disordered. The span at 9-22 (SSRRNGRIGSRKGA) shows a compositional bias: basic residues.

The protein belongs to the universal ribosomal protein uS11 family. As to quaternary structure, part of the 30S ribosomal subunit.

It localises to the plastid. The protein resides in the chloroplast. The sequence is that of Small ribosomal subunit protein uS11c from Nicotiana tomentosiformis (Tobacco).